The sequence spans 151 residues: Methylated-DNA--protein-cysteine methyltransferase (151 aa).

Cys-119 serves as the catalytic Nucleophile; methyl group acceptor.

This sequence belongs to the MGMT family.

The protein localises to the cytoplasm. It carries out the reaction a 6-O-methyl-2'-deoxyguanosine in DNA + L-cysteinyl-[protein] = S-methyl-L-cysteinyl-[protein] + a 2'-deoxyguanosine in DNA. The enzyme catalyses a 4-O-methyl-thymidine in DNA + L-cysteinyl-[protein] = a thymidine in DNA + S-methyl-L-cysteinyl-[protein]. Its function is as follows. Involved in the cellular defense against the biological effects of O6-methylguanine (O6-MeG) and O4-methylthymine (O4-MeT) in DNA. Repairs the methylated nucleobase in DNA by stoichiometrically transferring the methyl group to a cysteine residue in the enzyme. This is a suicide reaction: the enzyme is irreversibly inactivated. The polypeptide is Methylated-DNA--protein-cysteine methyltransferase (Saccharolobus islandicus (strain M.16.27) (Sulfolobus islandicus)).